Here is a 97-residue protein sequence, read N- to C-terminus: Integration host factor subunit alpha (97 aa).

The protein belongs to the bacterial histone-like protein family. In terms of assembly, heterodimer of an alpha and a beta chain.

Functionally, this protein is one of the two subunits of integration host factor, a specific DNA-binding protein that functions in genetic recombination as well as in transcriptional and translational control. This is Integration host factor subunit alpha from Hydrogenovibrio crunogenus (strain DSM 25203 / XCL-2) (Thiomicrospira crunogena).